The chain runs to 305 residues: Protoheme IX farnesyltransferase (305 aa).

The next 9 helical transmembrane spans lie at 26–46 (VMSLVVFTAFVGLWIAPQPVN), 47–67 (PFVAFCAVLFIALGGGASGAL), 98–118 (LAVGIALSGLSVMMLGLAANW), 119–139 (FAAGFLAFTIFFYAVVYTIWL), 147–167 (IVIGGAAGAFPPMIGWACATG), 174–194 (LLMFALIFFWTPPHFWALALF), 220–240 (IFAYTLVLAPFALWLGFTSVG), 243–263 (LYLAVSVVLNALFIAGGWQIL), and 284–304 (LSLYYTFLHFLALLVQHWVGG).

It belongs to the UbiA prenyltransferase family. Protoheme IX farnesyltransferase subfamily. As to quaternary structure, interacts with CtaA.

The protein resides in the cell inner membrane. The catalysed reaction is heme b + (2E,6E)-farnesyl diphosphate + H2O = Fe(II)-heme o + diphosphate. It functions in the pathway porphyrin-containing compound metabolism; heme O biosynthesis; heme O from protoheme: step 1/1. Functionally, converts heme B (protoheme IX) to heme O by substitution of the vinyl group on carbon 2 of heme B porphyrin ring with a hydroxyethyl farnesyl side group. The protein is Protoheme IX farnesyltransferase of Paracoccus denitrificans (strain Pd 1222).